The primary structure comprises 372 residues: Queuine tRNA-ribosyltransferase (372 aa).

The active-site Proton acceptor is Asp-90. Substrate is bound by residues 90 to 94, Asp-144, Gln-193, and Gly-220; that span reads DSGGF. The segment at 251 to 257 is RNA binding; it reads GVGTPED. The Nucleophile role is filled by Asp-270. Residues 275–279 are RNA binding; important for wobble base 34 recognition; the sequence is TRNAR. Positions 308, 310, 313, and 339 each coordinate Zn(2+).

Belongs to the queuine tRNA-ribosyltransferase family. As to quaternary structure, homodimer. Within each dimer, one monomer is responsible for RNA recognition and catalysis, while the other monomer binds to the replacement base PreQ1. Zn(2+) serves as cofactor.

The enzyme catalyses 7-aminomethyl-7-carbaguanine + guanosine(34) in tRNA = 7-aminomethyl-7-carbaguanosine(34) in tRNA + guanine. The protein operates within tRNA modification; tRNA-queuosine biosynthesis. Its function is as follows. Catalyzes the base-exchange of a guanine (G) residue with the queuine precursor 7-aminomethyl-7-deazaguanine (PreQ1) at position 34 (anticodon wobble position) in tRNAs with GU(N) anticodons (tRNA-Asp, -Asn, -His and -Tyr). Catalysis occurs through a double-displacement mechanism. The nucleophile active site attacks the C1' of nucleotide 34 to detach the guanine base from the RNA, forming a covalent enzyme-RNA intermediate. The proton acceptor active site deprotonates the incoming PreQ1, allowing a nucleophilic attack on the C1' of the ribose to form the product. After dissociation, two additional enzymatic reactions on the tRNA convert PreQ1 to queuine (Q), resulting in the hypermodified nucleoside queuosine (7-(((4,5-cis-dihydroxy-2-cyclopenten-1-yl)amino)methyl)-7-deazaguanosine). This chain is Queuine tRNA-ribosyltransferase, found in Campylobacter hominis (strain ATCC BAA-381 / DSM 21671 / CCUG 45161 / LMG 19568 / NCTC 13146 / CH001A).